The following is a 1233-amino-acid chain: Hemocyanin A-type, units Ode to Odg (1233 aa).

Positions 1–4 are ODD; that stretch reads EGNE. Positions 5 to 422 are ODE; sequence YLVRKNVERL…KQDADIDIPL (418 aa). His-45 serves as a coordination point for Cu cation. A disulfide bond links Cys-51 and Cys-62. Residues 63 to 65 constitute a cross-link (2'-(S-cysteinyl)-histidine (Cys-His)); it reads CLH. Cu cation is bound by residues His-65, His-74, His-186, His-190, and His-217. 2 cysteine pairs are disulfide-bonded: Cys-176–Cys-243 and Cys-334–Cys-340. A glycan (N-linked (GlcNAc...) asparagine) is linked at Asn-392. The interval 423-839 is ODF; that stretch reads NHIRRNVESL…KEIEKEAVRG (417 aa). Cu cation is bound at residue His-463. Residues Cys-468 and Cys-478 are joined by a disulfide bond. The segment at residues 479 to 481 is a cross-link (2'-(S-cysteinyl)-histidine (Cys-His)); the sequence is CLH. 2 residues coordinate Cu cation: His-481 and His-490. The N-linked (GlcNAc...) asparagine glycan is linked to Asn-538. 2 cysteine pairs are disulfide-bonded: Cys-589/Cys-656 and Cys-743/Cys-748. Positions 599, 603, and 630 each coordinate Cu cation. Residues 840 to 1233 are ODG; the sequence is TIIRKNVNSL…VFLAPAKTTH (394 aa). A Cu cation-binding site is contributed by His-880. Cys-886 and Cys-896 are joined by a disulfide. The N-linked (GlcNAc...) asparagine glycan is linked to Asn-890. The segment at residues 897-899 is a cross-link (2'-(S-cysteinyl)-histidine (Cys-His)); that stretch reads CQH. Cu cation-binding residues include His-899, His-908, His-1008, His-1012, and His-1039. Disulfide bonds link Cys-998-Cys-1065 and Cys-1152-Cys-1158.

The protein belongs to the tyrosinase family. Hemocyanin subfamily. In terms of assembly, decamers of large identical subunits (350 kDa), each containing 7 globular oxygen-binding domains: ODA, ODB, ODC, ODD, ODE, ODF, and ODG. It depends on Cu(2+) as a cofactor.

Functionally, hemocyanins are copper-containing oxygen carriers occurring freely dissolved in the hemolymph of many mollusks and arthropods. The chain is Hemocyanin A-type, units Ode to Odg from Enteroctopus dofleini (North Pacific giant octopus).